A 133-amino-acid chain; its full sequence is Stage III sporulation protein AD (133 aa).

3 helical membrane passes run 2–22 (QIDI…SLIV), 29–49 (FAFL…VDQI), and 108–128 (ILIL…ILGL).

It is found in the cell membrane. This chain is Stage III sporulation protein AD (spoIIIAD), found in Bacillus subtilis (strain 168).